The following is a 437-amino-acid chain: Mitochondrial distribution and morphology protein 12 (437 aa).

In terms of domain architecture, SMP-LTD spans 1–437 (MSIDINWRTA…VYPSFWTFLI (437 aa)). The segment covering 73 to 85 (DDDADTSDVSEDL) has biased composition (acidic residues). Disordered stretches follow at residues 73–101 (DDDA…SELN), 187–274 (SDSG…PPRM), and 354–384 (SEQQ…RQGG). A compositionally biased stretch (basic and acidic residues) spans 91-101 (SQWDRTHSELN). 2 stretches are compositionally biased toward polar residues: residues 215 to 240 (DTSN…NNLN) and 371 to 381 (ADSSAHTSQKR).

Belongs to the MDM12 family. As to quaternary structure, component of the ER-mitochondria encounter structure (ERMES) or MDM complex, composed of mmm1, mdm10, mdm12 and mdm34. A mmm1 homodimer associates with one molecule of mdm12 on each side in a pairwise head-to-tail manner, and the SMP-LTD domains of mmm1 and mdm12 generate a continuous hydrophobic tunnel for phospholipid trafficking.

It localises to the mitochondrion outer membrane. It is found in the endoplasmic reticulum membrane. Component of the ERMES/MDM complex, which serves as a molecular tether to connect the endoplasmic reticulum (ER) and mitochondria. Components of this complex are involved in the control of mitochondrial shape and protein biogenesis, and function in nonvesicular lipid trafficking between the ER and mitochondria. Mdm12 is required for the interaction of the ER-resident membrane protein mmm1 and the outer mitochondrial membrane-resident beta-barrel protein mdm10. The mdm12-mmm1 subcomplex functions in the major beta-barrel assembly pathway that is responsible for biogenesis of all mitochondrial outer membrane beta-barrel proteins, and acts in a late step after the SAM complex. The mdm10-mdm12-mmm1 subcomplex further acts in the TOM40-specific pathway after the action of the mdm12-mmm1 complex. Essential for establishing and maintaining the structure of mitochondria and maintenance of mtDNA nucleoids. The chain is Mitochondrial distribution and morphology protein 12 from Aspergillus clavatus (strain ATCC 1007 / CBS 513.65 / DSM 816 / NCTC 3887 / NRRL 1 / QM 1276 / 107).